We begin with the raw amino-acid sequence, 66 residues long: Large ribosomal subunit protein bL35 (66 aa).

It belongs to the bacterial ribosomal protein bL35 family.

The chain is Large ribosomal subunit protein bL35 from Synechococcus sp. (strain JA-2-3B'a(2-13)) (Cyanobacteria bacterium Yellowstone B-Prime).